The primary structure comprises 441 residues: Cysteine--tRNA ligase (441 aa).

Cysteine 24 lines the Zn(2+) pocket. A 'HIGH' region motif is present at residues 26–36 (PTVYNYIHIGN). Zn(2+)-binding residues include cysteine 204, histidine 230, and glutamate 234. The 'KMSKS' region motif lies at 262-266 (KMSKS). Lysine 265 contributes to the ATP binding site.

This sequence belongs to the class-I aminoacyl-tRNA synthetase family. In terms of assembly, monomer. The cofactor is Zn(2+).

The protein localises to the cytoplasm. The enzyme catalyses tRNA(Cys) + L-cysteine + ATP = L-cysteinyl-tRNA(Cys) + AMP + diphosphate. This chain is Cysteine--tRNA ligase, found in Mycoplasma capricolum subsp. capricolum (strain California kid / ATCC 27343 / NCTC 10154).